The sequence spans 326 residues: Eukaryotic translation initiation factor 3 subunit I (326 aa).

5 WD repeats span residues 8–47, 50–89, 145–184, 188–227, and 285–326; these read GHER…RLGT, GHQG…VIAS, MTES…KVVD, DHSA…CLKT, and GHFG…NIFE.

Belongs to the eIF-3 subunit I family. Component of the eukaryotic translation initiation factor 3 (eIF-3) complex. The eIF-3 complex interacts with pix.

The protein localises to the cytoplasm. Functionally, component of the eukaryotic translation initiation factor 3 (eIF-3) complex, which is involved in protein synthesis of a specialized repertoire of mRNAs and, together with other initiation factors, stimulates binding of mRNA and methionyl-tRNAi to the 40S ribosome. The eIF-3 complex specifically targets and initiates translation of a subset of mRNAs involved in cell proliferation. The chain is Eukaryotic translation initiation factor 3 subunit I from Drosophila simulans (Fruit fly).